The primary structure comprises 190 residues: MAGSRLETVGSIFTRTRDLIRAGVLKEKPLWFDVYNAFPPLREPVFRRPRLRYGKAKSPTQDIYYHEDQIRAKFYAAYGSGPKAFDLFNPNFKSTCQRFVEKYIELQKLGETDEEKLFVEAGKALLAEGVILRRVEKARTQQEGSQVSRKSESMGVESQTALEENPPLKEVPQAQHLESPGEESKGLSPP.

Ala2 is subject to N-acetylalanine. Lys83 is subject to N6-succinyllysine. Position 102 is an N6-acetyllysine (Lys102). A disordered region spans residues 137 to 190 (KARTQQEGSQVSRKSESMGVESQTALEENPPLKEVPQAQHLESPGEESKGLSPP).

It belongs to the mitochondrion-specific ribosomal protein mS23 family. As to quaternary structure, component of the mitochondrial ribosome small subunit (28S) which comprises a 12S rRNA and about 30 distinct proteins.

It is found in the mitochondrion. The polypeptide is Small ribosomal subunit protein mS23 (Bos taurus (Bovine)).